The chain runs to 152 residues: Large ribosomal subunit protein bL9 (152 aa).

The protein belongs to the bacterial ribosomal protein bL9 family.

Binds to the 23S rRNA. This is Large ribosomal subunit protein bL9 from Synechococcus sp. (strain RCC307).